Reading from the N-terminus, the 234-residue chain is Thymidine kinase, cytosolic (234 aa).

S2 carries the N-acetylserine modification. A phosphoserine mark is found at S2 and S13. ATP contacts are provided by residues 26–33 (GPMFSGKS), 58–60 (DTR), and 97–100 (DEGQ). Catalysis depends on E98, which acts as the Proton acceptor. F128 is a binding site for substrate. Residues C153 and C156 each contribute to the Zn(2+) site. Substrate is bound by residues 172–176 (VEVIG) and Y181. The Zn(2+) site is built by C185 and C188. The short motif at 203–205 (KEN) is the KEN box element. Position 231 is a phosphoserine (S231).

This sequence belongs to the thymidine kinase family. As to quaternary structure, homotetramer. Tetramerization from dimerization is induced by ATP and increases catalytic efficiency due to a high affinity for thymidine. Tetramerization is inhibited by phosphorylation at Ser-13. Interacts (via the KEN box) with FZR1. Post-translationally, phosphorylated on Ser-13 in mitosis. Phosphorylation of Ser-13 by CDK1 during mitosis reduces homotetramerization and catalytic efficiency when DNA replication is complete and intracellular TK1 is still present at a high level. Polyubiquitinated. Postmitosis, ubiquitination leads to proteasomal degradation. The KEN box sequence located at the C-terminal region targets for degradation by the anaphase promoting complex (APC/C) activated and rate-limited by FZR1.

Its subcellular location is the cytoplasm. The enzyme catalyses thymidine + ATP = dTMP + ADP + H(+). Cell-cycle-regulated enzyme of importance in nucleotide metabolism. Catalyzes the first enzymatic step in the salvage pathway converting thymidine into thymidine monophosphate. Transcriptional regulation limits expression to the S phase of the cell cycle and transient expression coincides with the oscillation in the intracellular dTTP concentration. Also important for the activation of anticancer and antiviral nucleoside analog prodrugs such as 1-b-d-arabinofuranosylcytosine (AraC) and 3c-azido-3c-deoxythymidine (AZT). The polypeptide is Thymidine kinase, cytosolic (Homo sapiens (Human)).